The chain runs to 311 residues: Cadmium, cobalt and zinc/H(+)-K(+) antiporter (311 aa).

Over 1–12 (MGHNHNEGANKK) the chain is Extracellular. The helical transmembrane segment at 13–33 (VLLISFIMITGYMIIEAIGGF) threads the bilayer. The Cytoplasmic segment spans residues 34–43 (LTNSLALLSD). A helical transmembrane segment spans residues 44–64 (AGHMLSDSISLMVALIAFTLA). The Extracellular portion of the chain corresponds to 65–78 (EKKANHNKTFGYKR). Residues 79–99 (FEILAAVINGAALILISLYII) form a helical membrane-spanning segment. The Cytoplasmic portion of the chain corresponds to 100 to 115 (YEAIERFSNPPKVATT). A helical transmembrane segment spans residues 116–136 (GMLTISIIGLVVNLLVAWIMM). Residues 137–157 (SGGDTKNNLNIRGAYLHVISD) are Extracellular-facing. A helical transmembrane segment spans residues 158-178 (MLGSVGAILAAILIIFFGWGW). The Cytoplasmic portion of the chain corresponds to 179-311 (ADPLASIIVA…MEKQRDHHHH (133 aa)).

This sequence belongs to the cation diffusion facilitator (CDF) transporter (TC 2.A.4) family. SLC30A subfamily.

Its subcellular location is the cell membrane. Its function is as follows. Involved in divalent cation and potassium homeostasis in the cell. Catalyzes the active efflux of zinc, cadmium and cobalt, in exchange for potassium and H(+) ions. The chain is Cadmium, cobalt and zinc/H(+)-K(+) antiporter (czcD) from Bacillus subtilis (strain 168).